Consider the following 277-residue polypeptide: N-acetylmuramic acid 6-phosphate etherase (277 aa).

An SIS domain is found at 53 to 216; sequence IIPRVKKGGR…STTIMIELGR (164 aa). The Proton donor role is filled by glutamate 81. Glutamate 112 is a catalytic residue.

It belongs to the GCKR-like family. MurNAc-6-P etherase subfamily. As to quaternary structure, homodimer.

The catalysed reaction is N-acetyl-D-muramate 6-phosphate + H2O = N-acetyl-D-glucosamine 6-phosphate + (R)-lactate. It functions in the pathway amino-sugar metabolism; N-acetylmuramate degradation. Specifically catalyzes the cleavage of the D-lactyl ether substituent of MurNAc 6-phosphate, producing GlcNAc 6-phosphate and D-lactate. This Bacteroides thetaiotaomicron (strain ATCC 29148 / DSM 2079 / JCM 5827 / CCUG 10774 / NCTC 10582 / VPI-5482 / E50) protein is N-acetylmuramic acid 6-phosphate etherase.